The sequence spans 490 residues: GTPase Der (490 aa).

2 EngA-type G domains span residues 3–166 (PVVA…MEDL) and 203–376 (IKLA…DSST). GTP-binding positions include 9-16 (GRPNVGKS), 56-60 (DTGGI), 118-121 (NKTD), 209-216 (GRPNVGKS), 256-260 (DTAGV), and 321-324 (NKWD). Residues 377-461 (RRVGTSMLTR…PIRIQFKEGE (85 aa)) form the KH-like domain.

Belongs to the TRAFAC class TrmE-Era-EngA-EngB-Septin-like GTPase superfamily. EngA (Der) GTPase family. In terms of assembly, associates with the 50S ribosomal subunit.

GTPase that plays an essential role in the late steps of ribosome biogenesis. The sequence is that of GTPase Der from Escherichia coli O157:H7.